The primary structure comprises 360 residues: Heat-inducible transcription repressor HrcA (360 aa).

The protein belongs to the HrcA family.

Negative regulator of class I heat shock genes (grpE-dnaK-dnaJ and groELS operons). Prevents heat-shock induction of these operons. The protein is Heat-inducible transcription repressor HrcA of Mesorhizobium japonicum (strain LMG 29417 / CECT 9101 / MAFF 303099) (Mesorhizobium loti (strain MAFF 303099)).